The chain runs to 878 residues: MSQYVSSMIKYAQSGDSFNILIKDNAKKITEKQFSLAYVECPRFRREGDEPFAFEAQEFSRRLVVGRPASVSTLYVIPTSKREYGRIRTSEFDLAESLLREGLAKLRPEATRNEGTSENSYFVSLEEAQDHAQQYKLGIWGPSDDVVVTEKANPANPAKFLKAHKGKKLNGIVETIRNGDQVRVRLFLSPKQHQLVTISLAGVRCPRSTFTATSPEQTSSEQEPCGDEAKQFVVTRLLQRNVVIELLDLAPNGVSFLGNVLHPAGNIATFLLSSGLGRVADNHISALGPETMQSLRTIERKAKISRLGIWKNISVSIPDINSLSLKDYSAVVSRVISTDTLEVRKDNGVECRIQLSSIRHPRPSNEKEAPYQLEAREFLRKKIIGKRVQVSLDFIRPGQNDLPAINNCTVKLSDGTNVALMVVKSGYATVIRYRMDSVDRSPIYDFLIEAEKAAQEGRKGMWSGKKPAYENIVNASESSLRSRQYLSSLQRTRKLSVIIENVISGSRFRCFCPKENCYFMFACAGIRTPRTARNDQEKGEPFAEESLSLAKSLLQHDAQVEILSVDNNGCFLGDIYVNHDTNFALKLLSQGLAWCQGYASQSNVQYSQYHDTEAAAKEQKVGMWHDYVPPEKKAASTEKESENTVKEPIYLDIVLSDIAEDGKFSFQIIGTGIQQLETLMSDLGSLKKSFKPSEKINVGMNVAAISALDNAMYRGRVLRCDRENQAADVLLYDYGSVEQIPFKNISSLPDTYTKLKPQAQLARLSYVQLPPPSSDYYEDARLVFRELAMNKGLVAKVDGHEGNVYSVTLYNPSDGSDFSDCINAQLVALGMASVIPKKKTSHFEKDTASLNILEEHQQEARLNHIGFWVYGDPLEYED.

2 TNase-like domains span residues 3 to 142 (QYVS…IWGP) and 167 to 312 (KKLN…IWKN). Ser-316 is modified (phosphoserine). TNase-like domains follow at residues 326-464 (KDYS…MWSG) and 493-626 (RKLS…MWHD). Residues 695–755 (KINVGMNVAA…SSLPDTYTKL (61 aa)) form the Tudor domain.

Its subcellular location is the cytoplasm. It is found in the cytosol. The protein is Staphylococcal nuclease domain-containing protein 1 of Schizosaccharomyces pombe (strain 972 / ATCC 24843) (Fission yeast).